The primary structure comprises 300 residues: N-acetylmuramic acid 6-phosphate etherase (300 aa).

Residues 57–220 (ITHAFAHGGR…TSGAMIRSGK (164 aa)) enclose the SIS domain. Glutamate 85 acts as the Proton donor in catalysis. The active site involves glutamate 116.

The protein belongs to the GCKR-like family. MurNAc-6-P etherase subfamily. As to quaternary structure, homodimer.

The enzyme catalyses N-acetyl-D-muramate 6-phosphate + H2O = N-acetyl-D-glucosamine 6-phosphate + (R)-lactate. It participates in amino-sugar metabolism; 1,6-anhydro-N-acetylmuramate degradation. Its pathway is amino-sugar metabolism; N-acetylmuramate degradation. The protein operates within cell wall biogenesis; peptidoglycan recycling. Specifically catalyzes the cleavage of the D-lactyl ether substituent of MurNAc 6-phosphate, producing GlcNAc 6-phosphate and D-lactate. Together with AnmK, is also required for the utilization of anhydro-N-acetylmuramic acid (anhMurNAc) either imported from the medium or derived from its own cell wall murein, and thus plays a role in cell wall recycling. In Vibrio vulnificus (strain CMCP6), this protein is N-acetylmuramic acid 6-phosphate etherase.